The following is a 159-amino-acid chain: Phosphopantetheine adenylyltransferase (159 aa).

Substrate is bound at residue T10. ATP contacts are provided by residues 10–11 (TF) and H18. The substrate site is built by K42, M74, and R88. Residues 89 to 91 (GLR), E99, and 124 to 130 (WSFISSS) each bind ATP.

It belongs to the bacterial CoaD family. Homohexamer. Mg(2+) is required as a cofactor.

The protein localises to the cytoplasm. The enzyme catalyses (R)-4'-phosphopantetheine + ATP + H(+) = 3'-dephospho-CoA + diphosphate. The protein operates within cofactor biosynthesis; coenzyme A biosynthesis; CoA from (R)-pantothenate: step 4/5. Functionally, reversibly transfers an adenylyl group from ATP to 4'-phosphopantetheine, yielding dephospho-CoA (dPCoA) and pyrophosphate. This is Phosphopantetheine adenylyltransferase from Escherichia coli (strain SMS-3-5 / SECEC).